The following is a 231-amino-acid chain: Large ribosomal subunit protein uL1 (231 aa).

The protein belongs to the universal ribosomal protein uL1 family. In terms of assembly, part of the 50S ribosomal subunit.

Binds directly to 23S rRNA. The L1 stalk is quite mobile in the ribosome, and is involved in E site tRNA release. Functionally, protein L1 is also a translational repressor protein, it controls the translation of the L11 operon by binding to its mRNA. This Ectopseudomonas mendocina (strain ymp) (Pseudomonas mendocina) protein is Large ribosomal subunit protein uL1.